The following is a 257-amino-acid chain: 5'-nucleotidase SurE (257 aa).

Residues aspartate 8, aspartate 9, serine 40, and asparagine 93 each coordinate a divalent metal cation.

The protein belongs to the SurE nucleotidase family. Requires a divalent metal cation as cofactor.

It is found in the cytoplasm. The catalysed reaction is a ribonucleoside 5'-phosphate + H2O = a ribonucleoside + phosphate. Functionally, nucleotidase that shows phosphatase activity on nucleoside 5'-monophosphates. This Phenylobacterium zucineum (strain HLK1) protein is 5'-nucleotidase SurE.